We begin with the raw amino-acid sequence, 438 residues long: MADSCTMTTDLNIPLFERAKAVIPGGVNSPVRAFNAVGGTPRFVRRAQGAHFWDENAQQFTDYIGSWGPMILGHGHPEVMAAVQAAALEGFSFGAPTEREVVLAEKILSLMPSMDMVRMVSSGTEAGMSALRLARGFTGRNKIIKFNGCYHGHADALLVKAGSGLATFGASSSAGVPQDVVKDTVVLEYNDVGQLEEAFAQFGDQIACVIMEPIAGNMNFVRASVPFTRRIRELTREHGALMVYDEVMTGFRVALGSAQSLYAQHIEGFAPDITVLGKVIGGGMPMAAFGARREIMEKLSPLGPVYQAGTLSGNPIATACGLKTLELISEPGFHDALHAKTGRLMAGFKAEADAAGVPFSVDHQGGLFGFYLLPELPSTWTEVMKTDGARFNRFFHGMLERGHYFAPALYEAGFVSAAHTDADIDKTIEAAREVFKTL.

The residue at position 278 (lysine 278) is an N6-(pyridoxal phosphate)lysine.

This sequence belongs to the class-III pyridoxal-phosphate-dependent aminotransferase family. HemL subfamily. In terms of assembly, homodimer. The cofactor is pyridoxal 5'-phosphate.

The protein resides in the cytoplasm. It carries out the reaction (S)-4-amino-5-oxopentanoate = 5-aminolevulinate. Its pathway is porphyrin-containing compound metabolism; protoporphyrin-IX biosynthesis; 5-aminolevulinate from L-glutamyl-tRNA(Glu): step 2/2. The sequence is that of Glutamate-1-semialdehyde 2,1-aminomutase from Delftia acidovorans (strain DSM 14801 / SPH-1).